The following is a 578-amino-acid chain: Sulfite reductase [NADPH] hemoprotein beta-component (578 aa).

Residues 1 to 11 (MSANQQSNSQE) show a composition bias toward polar residues. The tract at residues 1–20 (MSANQQSNSQEVLGEVLGPL) is disordered. [4Fe-4S] cluster-binding residues include Cys-441, Cys-447, Cys-487, and Cys-491. Cys-491 serves as a coordination point for siroheme.

Belongs to the nitrite and sulfite reductase 4Fe-4S domain family. As to quaternary structure, alpha(8)-beta(8). The alpha component is a flavoprotein, the beta component is a hemoprotein. Siroheme is required as a cofactor. The cofactor is [4Fe-4S] cluster.

The catalysed reaction is hydrogen sulfide + 3 NADP(+) + 3 H2O = sulfite + 3 NADPH + 4 H(+). Its pathway is sulfur metabolism; hydrogen sulfide biosynthesis; hydrogen sulfide from sulfite (NADPH route): step 1/1. Its function is as follows. Component of the sulfite reductase complex that catalyzes the 6-electron reduction of sulfite to sulfide. This is one of several activities required for the biosynthesis of L-cysteine from sulfate. The polypeptide is Sulfite reductase [NADPH] hemoprotein beta-component (Vibrio campbellii (strain ATCC BAA-1116)).